The following is a 202-amino-acid chain: Sperm-specific H1/protamine-like protein type 1 (202 aa).

Over residues 1-35 the composition is skewed to basic residues; it reads MPSPSRKSRSRSRSRSKSPKRSPAKKARKTPKKPR. Disordered regions lie at residues 1-46 and 104-202; these read MPSP…PTTL and KTSA…QFAL. The H15 domain occupies 41-120; it reads KKPTTLSMIV…GATGSFRVGK (80 aa). Residues 126-156 show a composition bias toward basic residues; it reads KKAKKAKSPKKKSSKKSKNKSNNAKAKKSPK. Positions 177–187 are enriched in low complexity; it reads GARYPFRYQAY.

OE1 and OE3 are produced by post-translational cleavage of a common precursor. As to expression, sperm.

The protein localises to the nucleus. The protein resides in the chromosome. Its function is as follows. Linker histones are implicated in chromatin remodeling and/or transcriptional regulation during spermiogenesis, the process of spermatid maturation into spermatozoa. Protamines substitute for histones in the chromatin of sperm during the haploid phase of spermatogenesis. They compact sperm DNA into a highly condensed, stable and inactive complex. This chain is Sperm-specific H1/protamine-like protein type 1, found in Ostrea edulis (Native oyster).